The following is a 356-amino-acid chain: Histidine biosynthesis bifunctional protein HisB (356 aa).

Residues 1–166 form a histidinol-phosphatase region; that stretch reads MSKKVLFIDR…AICNYLTSLN (166 aa). Catalysis depends on aspartate 9, which acts as the Nucleophile. Aspartate 9 and aspartate 11 together coordinate Mg(2+). Aspartate 11 serves as the catalytic Proton donor. Zn(2+) contacts are provided by cysteine 93, histidine 95, cysteine 101, and cysteine 103. Residue aspartate 130 participates in Mg(2+) binding. Positions 167–356 are imidazoleglycerol-phosphate dehydratase; sequence RYAHVKRITK…VLPSSKGVLS (190 aa).

The protein in the N-terminal section; belongs to the histidinol-phosphatase family. It in the C-terminal section; belongs to the imidazoleglycerol-phosphate dehydratase family. Mg(2+) serves as cofactor. The cofactor is Zn(2+).

It localises to the cytoplasm. The enzyme catalyses D-erythro-1-(imidazol-4-yl)glycerol 3-phosphate = 3-(imidazol-4-yl)-2-oxopropyl phosphate + H2O. It catalyses the reaction L-histidinol phosphate + H2O = L-histidinol + phosphate. Its pathway is amino-acid biosynthesis; L-histidine biosynthesis; L-histidine from 5-phospho-alpha-D-ribose 1-diphosphate: step 6/9. It participates in amino-acid biosynthesis; L-histidine biosynthesis; L-histidine from 5-phospho-alpha-D-ribose 1-diphosphate: step 8/9. The polypeptide is Histidine biosynthesis bifunctional protein HisB (Baumannia cicadellinicola subsp. Homalodisca coagulata).